The sequence spans 325 residues: Tetraacyldisaccharide 4'-kinase (325 aa).

Residue 55–62 coordinates ATP; the sequence is TAGGNGKT.

This sequence belongs to the LpxK family.

The enzyme catalyses a lipid A disaccharide + ATP = a lipid IVA + ADP + H(+). It participates in glycolipid biosynthesis; lipid IV(A) biosynthesis; lipid IV(A) from (3R)-3-hydroxytetradecanoyl-[acyl-carrier-protein] and UDP-N-acetyl-alpha-D-glucosamine: step 6/6. Transfers the gamma-phosphate of ATP to the 4'-position of a tetraacyldisaccharide 1-phosphate intermediate (termed DS-1-P) to form tetraacyldisaccharide 1,4'-bis-phosphate (lipid IVA). In Salmonella paratyphi C (strain RKS4594), this protein is Tetraacyldisaccharide 4'-kinase.